The sequence spans 441 residues: tRNA-2-methylthio-N(6)-dimethylallyladenosine synthase (441 aa).

The region spanning 5–121 is the MTTase N-terminal domain; sequence KKLFIKTYGC…LPQMEARLRE (117 aa). The [4Fe-4S] cluster site is built by Cys14, Cys50, Cys84, Cys159, Cys163, and Cys166. Residues 145–380 enclose the Radical SAM core domain; the sequence is ARRAPSAFLT…TRQQQDIQQS (236 aa). Positions 379-441 constitute a TRAM domain; sequence QSMVGRDVSV…RNSLAAVTLA (63 aa).

This sequence belongs to the methylthiotransferase family. MiaB subfamily. As to quaternary structure, monomer. It depends on [4Fe-4S] cluster as a cofactor.

It is found in the cytoplasm. It catalyses the reaction N(6)-dimethylallyladenosine(37) in tRNA + (sulfur carrier)-SH + AH2 + 2 S-adenosyl-L-methionine = 2-methylsulfanyl-N(6)-dimethylallyladenosine(37) in tRNA + (sulfur carrier)-H + 5'-deoxyadenosine + L-methionine + A + S-adenosyl-L-homocysteine + 2 H(+). Catalyzes the methylthiolation of N6-(dimethylallyl)adenosine (i(6)A), leading to the formation of 2-methylthio-N6-(dimethylallyl)adenosine (ms(2)i(6)A) at position 37 in tRNAs that read codons beginning with uridine. The sequence is that of tRNA-2-methylthio-N(6)-dimethylallyladenosine synthase from Roseobacter denitrificans (strain ATCC 33942 / OCh 114) (Erythrobacter sp. (strain OCh 114)).